The chain runs to 302 residues: N-acetylmuramic acid 6-phosphate etherase (302 aa).

The SIS domain maps to Val57–Lys220. Glu85 serves as the catalytic Proton donor. Glu116 is a catalytic residue.

It belongs to the GCKR-like family. MurNAc-6-P etherase subfamily. Homodimer.

It carries out the reaction N-acetyl-D-muramate 6-phosphate + H2O = N-acetyl-D-glucosamine 6-phosphate + (R)-lactate. Its pathway is amino-sugar metabolism; N-acetylmuramate degradation. Its function is as follows. Specifically catalyzes the cleavage of the D-lactyl ether substituent of MurNAc 6-phosphate, producing GlcNAc 6-phosphate and D-lactate. The protein is N-acetylmuramic acid 6-phosphate etherase of Clostridium acetobutylicum (strain ATCC 824 / DSM 792 / JCM 1419 / IAM 19013 / LMG 5710 / NBRC 13948 / NRRL B-527 / VKM B-1787 / 2291 / W).